The chain runs to 393 residues: MTRVVLAAAYRTPIGVFGGAFKDVPAYDLGATLIEHIIKETGLNPSEIDEVIIGNVLQAGQGQNPARIAAMKGGLPETVPAFTVNKVCGSGLKSIQLAYQSIVTGENDIVLAGGMENMSQSPMLVNNSRFGFKMGHQSMVDSMVYDGLTDVFNQYHMGITAENLAEQYGISREEQDTFAVNSQQKAVRAQQNGEFDSEIVPVSIPQRKGEPIVVTKDEGVRENVSVEKLSRLRPAFKKDGTVTAGNASGINDGAAMMLVMSEDKAKELNIEPLAVLDGFGSHGVDPSIMGIAPVGAVEKALKRSKKELSDIDVFELNEAFAAQSLAVDRELKLPPEKVNVKGGAIALGHPIGASGARVLVTLLHQLNDEVETGLTSLCIGGGQAIAAVVSKYK.

The active-site Acyl-thioester intermediate is Cys-88. Active-site proton acceptor residues include His-349 and Cys-378.

The protein belongs to the thiolase-like superfamily. Thiolase family.

The protein localises to the cytoplasm. The enzyme catalyses 2 acetyl-CoA = acetoacetyl-CoA + CoA. This is Probable acetyl-CoA acyltransferase from Staphylococcus aureus (strain COL).